The chain runs to 397 residues: Acetate kinase 2 (397 aa).

Asn-10 contributes to the Mg(2+) binding site. Residue Lys-17 coordinates ATP. Arg-90 lines the substrate pocket. Asp-147 acts as the Proton donor/acceptor in catalysis. ATP-binding positions include 207-211, 281-283, and 329-333; these read HLGNG, DAR, and GIGEN. Position 385 (Glu-385) interacts with Mg(2+).

It belongs to the acetokinase family. Homodimer. Mg(2+) is required as a cofactor. The cofactor is Mn(2+).

It is found in the cytoplasm. The enzyme catalyses acetate + ATP = acetyl phosphate + ADP. It functions in the pathway metabolic intermediate biosynthesis; acetyl-CoA biosynthesis; acetyl-CoA from acetate: step 1/2. Catalyzes the formation of acetyl phosphate from acetate and ATP. Can also catalyze the reverse reaction. In Vibrio parahaemolyticus serotype O3:K6 (strain RIMD 2210633), this protein is Acetate kinase 2.